The primary structure comprises 83 residues: Calsensin (83 aa).

EF-hand domains follow at residues 4 to 39 (KVKA…LDAY) and 46 to 81 (KVKE…LLCQ). Ca(2+) contacts are provided by D17, N19, D21, Y23, E28, D59, N61, D63, K65, and E70.

Selectively expressed in a small group of neurons.

Its subcellular location is the cytoplasm. Functionally, may function as a trigger protein which interacts with a larger protein. May mediate calcium-dependent signal transduction events in the growth cones and axons of a small group of sensory neurons which fasciculate in a single axon tract. The protein is Calsensin of Haemopis marmorata (Green horse leech).